A 133-amino-acid polypeptide reads, in one-letter code: ATP synthase epsilon chain (133 aa).

The protein belongs to the ATPase epsilon chain family. In terms of assembly, F-type ATPases have 2 components, CF(1) - the catalytic core - and CF(0) - the membrane proton channel. CF(1) has five subunits: alpha(3), beta(3), gamma(1), delta(1), epsilon(1). CF(0) has three main subunits: a, b and c.

It is found in the cell membrane. Functionally, produces ATP from ADP in the presence of a proton gradient across the membrane. In Mycoplasma pneumoniae (strain ATCC 29342 / M129 / Subtype 1) (Mycoplasmoides pneumoniae), this protein is ATP synthase epsilon chain (atpC).